Here is a 423-residue protein sequence, read N- to C-terminus: ATP-citrate synthase alpha chain protein 1 (423 aa).

Citrate is bound by residues asparagine 343, threonine 345, and arginine 376.

The protein belongs to the succinate/malate CoA ligase beta subunit family. As to quaternary structure, heterooctamer of 4 alpha and 4 beta chains. In terms of tissue distribution, expressed in trichomes, epidermal leaf cells, anther tapetal cells, stigma and in young vascular bundles of expanding leaves, cotyledons, roots, pedicel of flowers and siliques.

The protein resides in the cytoplasm. It localises to the cytosol. It carries out the reaction oxaloacetate + acetyl-CoA + ADP + phosphate = citrate + ATP + CoA. In terms of biological role, ATP citrate-lyase is the primary enzyme responsible for the synthesis of cytosolic acetyl-CoA, used for the elongation of fatty acids and biosynthesis of isoprenoids, flavonoids and malonated derivatives. May supply substrate to the cytosolic acetyl-CoA carboxylase, which generates the malonyl-CoA used for the synthesis of a multitude of compounds, including very long chain fatty acids and flavonoids. Required for normal growth and development and elongation of C18 fatty acids to C20 to C24 fatty acids in seeds. In contrast to all known animal ACL enzymes having a homomeric structure, plant ACLs are composed of alpha and beta chains. The protein is ATP-citrate synthase alpha chain protein 1 (ACLA-1) of Arabidopsis thaliana (Mouse-ear cress).